The primary structure comprises 439 residues: Arginine biosynthesis bifunctional protein ArgJ, mitochondrial (439 aa).

Residues Thr175, Lys201, Thr212, Glu301, Asn434, and Ser439 each contribute to the substrate site. Residue Thr212 is the Nucleophile of the active site.

Belongs to the ArgJ family. Heterodimer of an alpha and a beta chain. The alpha and beta chains are autoproteolytically processed from a single precursor protein within the mitochondrion.

It localises to the mitochondrion matrix. It carries out the reaction N(2)-acetyl-L-ornithine + L-glutamate = N-acetyl-L-glutamate + L-ornithine. The catalysed reaction is L-glutamate + acetyl-CoA = N-acetyl-L-glutamate + CoA + H(+). Its pathway is amino-acid biosynthesis; L-arginine biosynthesis; L-ornithine and N-acetyl-L-glutamate from L-glutamate and N(2)-acetyl-L-ornithine (cyclic): step 1/1. The protein operates within amino-acid biosynthesis; L-arginine biosynthesis; N(2)-acetyl-L-ornithine from L-glutamate: step 1/4. Functionally, catalyzes two activities which are involved in the cyclic version of arginine biosynthesis: the synthesis of acetylglutamate from glutamate and acetyl-CoA, and of ornithine by transacetylation between acetylornithine and glutamate. The sequence is that of Arginine biosynthesis bifunctional protein ArgJ, mitochondrial (ECM42) from Candida albicans (strain SC5314 / ATCC MYA-2876) (Yeast).